The following is a 205-amino-acid chain: Holliday junction branch migration complex subunit RuvA (205 aa).

The tract at residues 1-64 (MIGRLNGILV…EDAQLLFGFN (64 aa)) is domain I. Residues 65-143 (NKVERALFRE…NWGNDLFTPF (79 aa)) form a domain II region. The segment at 144-156 (SDSAVIEPFSDAT) is flexible linker. Positions 157-205 (IANNAADDAVSALVSLGYKLPQAQKAVKSVSKPDMSTEVLIKESLKSML) are domain III.

This sequence belongs to the RuvA family. As to quaternary structure, homotetramer. Forms an RuvA(8)-RuvB(12)-Holliday junction (HJ) complex. HJ DNA is sandwiched between 2 RuvA tetramers; dsDNA enters through RuvA and exits via RuvB. An RuvB hexamer assembles on each DNA strand where it exits the tetramer. Each RuvB hexamer is contacted by two RuvA subunits (via domain III) on 2 adjacent RuvB subunits; this complex drives branch migration. In the full resolvosome a probable DNA-RuvA(4)-RuvB(12)-RuvC(2) complex forms which resolves the HJ.

Its subcellular location is the cytoplasm. Functionally, the RuvA-RuvB-RuvC complex processes Holliday junction (HJ) DNA during genetic recombination and DNA repair, while the RuvA-RuvB complex plays an important role in the rescue of blocked DNA replication forks via replication fork reversal (RFR). RuvA specifically binds to HJ cruciform DNA, conferring on it an open structure. The RuvB hexamer acts as an ATP-dependent pump, pulling dsDNA into and through the RuvAB complex. HJ branch migration allows RuvC to scan DNA until it finds its consensus sequence, where it cleaves and resolves the cruciform DNA. In Pseudoalteromonas translucida (strain TAC 125), this protein is Holliday junction branch migration complex subunit RuvA.